Here is a 288-residue protein sequence, read N- to C-terminus: Acetyl-coenzyme A carboxylase carboxyl transferase subunit beta (288 aa).

One can recognise a CoA carboxyltransferase N-terminal domain in the interval leucine 32 to arginine 288. Zn(2+) is bound by residues cysteine 36, cysteine 39, cysteine 55, and cysteine 58. The segment at cysteine 36–cysteine 58 adopts a C4-type zinc-finger fold.

Belongs to the AccD/PCCB family. As to quaternary structure, acetyl-CoA carboxylase is a heterohexamer composed of biotin carboxyl carrier protein (AccB), biotin carboxylase (AccC) and two subunits each of ACCase subunit alpha (AccA) and ACCase subunit beta (AccD). Requires Zn(2+) as cofactor.

Its subcellular location is the cytoplasm. The catalysed reaction is N(6)-carboxybiotinyl-L-lysyl-[protein] + acetyl-CoA = N(6)-biotinyl-L-lysyl-[protein] + malonyl-CoA. It participates in lipid metabolism; malonyl-CoA biosynthesis; malonyl-CoA from acetyl-CoA: step 1/1. Functionally, component of the acetyl coenzyme A carboxylase (ACC) complex. Biotin carboxylase (BC) catalyzes the carboxylation of biotin on its carrier protein (BCCP) and then the CO(2) group is transferred by the transcarboxylase to acetyl-CoA to form malonyl-CoA. This is Acetyl-coenzyme A carboxylase carboxyl transferase subunit beta from Ruminiclostridium cellulolyticum (strain ATCC 35319 / DSM 5812 / JCM 6584 / H10) (Clostridium cellulolyticum).